Here is an 898-residue protein sequence, read N- to C-terminus: Serine/threonine-protein kinase TAO3 (898 aa).

One can recognise a Protein kinase domain in the interval Phe-24–Val-277. Residues Ile-30–Val-38 and Lys-53 each bind ATP. Asp-147 serves as the catalytic Proton acceptor. 2 disordered regions span residues Thr-316 to Ser-362 and Asp-405 to Gln-425. Residue Ser-324 is modified to Phosphoserine; by ATM. Phosphoserine occurs at positions 331, 343, 346, and 349. Residues Gly-334–Pro-351 are compositionally biased toward polar residues. Positions Ser-352–Ser-362 are enriched in low complexity. Residue Thr-357 is modified to Phosphothreonine. Position 359 is a phosphoserine (Ser-359). A compositionally biased stretch (basic and acidic residues) spans Asp-405 to Pro-416. A Phosphoserine modification is found at Ser-442. Coiled-coil stretches lie at residues Glu-452–Asn-502, Phe-548–Leu-649, and Leu-754–Ser-879. The interval Glu-565–Glu-596 is disordered. An N6-acetyllysine modification is found at Lys-830.

It belongs to the protein kinase superfamily. STE Ser/Thr protein kinase family. STE20 subfamily. Self-associates. Interacts with ERN1 and TRAF2. Interaction with TRAF2 is facilitated under ER stress conditions, such as treatment with tunicamycin, and may promote TRAF2 phosphorylation. Interacts (via N-terminus) with STK25; the interaction promotes STK25 abundance at the level of protein expression and/or stability. In terms of assembly, (Microbial infection) Interacts with herpes simplex virus 1 UL37 protein. Post-translationally, autophosphorylated. Phosphorylation at Ser-324 by ATM following DNA damage is required for activation of the p38/MAPK14 stress-activated MAPK cascade. Phosphorylated at Ser-324 and on Tyr residues during T cell activation. Phosphorylated by LRRK2. As to expression, ubiquitously expressed at a low level, and highly expressed in peripheral blood leukocytes (PBLs), thymus, spleen, kidney, skeletal muscle, heart and liver.

The protein localises to the cytoplasm. Its subcellular location is the cell membrane. It localises to the membrane raft. The protein resides in the lipid droplet. The catalysed reaction is L-seryl-[protein] + ATP = O-phospho-L-seryl-[protein] + ADP + H(+). It carries out the reaction L-threonyl-[protein] + ATP = O-phospho-L-threonyl-[protein] + ADP + H(+). Functionally, serine/threonine-protein kinase that acts as a regulator of the p38/MAPK14 stress-activated MAPK cascade and of the MAPK8/JNK cascade. In response to DNA damage, involved in the G2/M transition DNA damage checkpoint by activating the p38/MAPK14 stress-activated MAPK cascade, probably by mediating phosphorylation of upstream MAP2K3 and MAP2K6 kinases. Inhibits basal activity of the MAPK8/JNK cascade and diminishes its activation in response to epidermal growth factor (EGF). Positively regulates canonical T cell receptor (TCR) signaling by preventing early PTPN6/SHP1-mediated inactivation of LCK, ensuring sustained TCR signaling that is required for optimal activation and differentiation of T cells. Phosphorylates PTPN6/SHP1 on 'Thr-394', leading to its polyubiquitination and subsequent proteasomal degradation. Required for cell surface expression of metalloprotease ADAM10 on type 1 transitional B cells which is necessary for their NOTCH-mediated development into marginal zone B cells. Also required for the NOTCH-mediated terminal differentiation of splenic conventional type 2 dendritic cells. Positively regulates osteoblast differentiation by acting as an upstream activator of the JNK pathway. Promotes JNK signaling in hepatocytes and positively regulates hepatocyte lipid storage by inhibiting beta-oxidation and triacylglycerol secretion while enhancing lipid synthesis. Restricts age-associated inflammation by negatively regulating differentiation of macrophages and their production of pro-inflammatory cytokines. Plays a role in negatively regulating the abundance of regulatory T cells in white adipose tissue. This Homo sapiens (Human) protein is Serine/threonine-protein kinase TAO3 (TAOK3).